The primary structure comprises 398 residues: MSGSSLPSALALSLLLVSGSLLPGPGAAQNAGFVKSPMSETKLTGDAFELYCDVVGSPTPEIQWWYAEVNRAESFRQLWDGARKRRVTVNTAYGSNGVSVLRITRLTLEDSGTYECRASNDPKRNDLRQNPSITWIRAQATISVLQKPRIVTSEEVIIRDSPVLPVTLQCNLTSSSHTLTYSYWTKNGVELSATRKNASNMEYRINKPRAEDSGEYHCVYHFVSAPKANATIEVKAAPDITGHKRSENKNEGQDATMYCKSVGYPHPDWIWRKKENGMPMDIVNTSGRFFIINKENYTELNIVNLQITEDPGEYECNATNAIGSASVVTVLRVRSHLAPLWPFLGILAEIIILVVIIVVYEKRKRPDEVPDDDEPAGPMKTNSTNNHKDKNLRQRNTN.

A signal peptide spans 1–28 (MSGSSLPSALALSLLLVSGSLLPGPGAA). 3 consecutive Ig-like domains span residues 29–134 (QNAG…PSIT), 148–235 (PRIV…IEVK), and 238–329 (PDIT…SVVT). Over 29–339 (QNAGFVKSPM…VLRVRSHLAP (311 aa)) the chain is Extracellular. A disulfide bridge links C52 with C116. Residues 149–161 (RIVTSEEVIIRDS) are narpin; mediates binding with FGFR1 and has antidepressant-like activity. An intrachain disulfide couples C170 to C218. 6 N-linked (GlcNAc...) asparagine glycosylation sites follow: N171, N197, N229, N284, N296, and N317. C259 and C316 are disulfide-bonded. A helical membrane pass occupies residues 340–360 (LWPFLGILAEIIILVVIIVVY). Topologically, residues 361–398 (EKRKRPDEVPDDDEPAGPMKTNSTNNHKDKNLRQRNTN) are cytoplasmic. A disordered region spans residues 365–398 (RPDEVPDDDEPAGPMKTNSTNNHKDKNLRQRNTN).

As to quaternary structure, interacts with ATP2B1; this interaction stabilizes ATP2B1 and increases ATPase activity; this interaction controls T cell calcium homeostasis following T cell activation. Interacts with XKR8; promoting its localization at the cell membrane. In terms of tissue distribution, isoform 1 is ubiquitously expressed. Isoform 2 is expressed in brain cortex and cerebellum (at protein level).

The protein resides in the cell membrane. It localises to the postsynaptic density. In terms of biological role, probable homophilic and heterophilic cell adhesion molecule involved in long term potentiation at hippocampal excitatory synapses through activation of p38MAPK. May also regulate neurite outgrowth by activating the FGFR1 signaling pathway. May play a role in synaptic plasticity. Also acts as a chaperone for ATP2B1; stabilizes ATP2B1 and increases its ATPase activity. Promotes localization of XKR8 at the cell membrane. The chain is Neuroplastin (NPTN) from Homo sapiens (Human).